The following is a 1157-amino-acid chain: Hephaestin (1157 aa).

The first 18 residues, 1 to 18 (MKAGHLLWALLLMHSLWS), serve as a signal peptide directing secretion. Over 19 to 1109 (IPTDGAIRNY…PIKDVEILSS (1091 aa)) the chain is Extracellular. Plastocyanin-like domains follow at residues 24 to 206 (AIRN…LITC), 218 to 366 (QRKD…VDSC), 370 to 559 (PPVD…LLVC), 569 to 717 (KQKG…VSQC), 730 to 902 (ASRV…LVIC), and 910 to 1066 (NGGR…SHEE). N-linked (GlcNAc...) asparagine glycosylation is found at asparagine 49 and asparagine 54. Na(+)-binding residues include glycine 70 and tyrosine 73. Residues histidine 126 and histidine 128 each coordinate Cu(2+). Histidine 126 lines the O2 pocket. Residues lysine 134, aspartate 152, and aspartate 153 each contribute to the Ca(2+) site. Asparagine 164 carries an N-linked (GlcNAc...) asparagine glycan. A disulfide bridge links cysteine 180 with cysteine 206. Cu(2+)-binding residues include histidine 186 and histidine 188. Histidine 186 serves as a coordination point for O2. Asparagine 236 carries an N-linked (GlcNAc...) asparagine glycan. Residue serine 265 participates in Na(+) binding. Cysteine 285 and cysteine 366 are joined by a disulfide. Residues histidine 304, cysteine 347, and histidine 352 each contribute to the Cu(2+) site. Na(+)-binding residues include tyrosine 416, glycine 425, and tyrosine 428. An intrachain disulfide couples cysteine 533 to cysteine 559. N-linked (GlcNAc...) asparagine glycosylation is present at asparagine 587. Residue serine 616 participates in Na(+) binding. A disulfide bridge links cysteine 636 with cysteine 717. 4 residues coordinate Cu(2+): histidine 655, cysteine 698, histidine 703, and methionine 708. Asparagine 713 and asparagine 757 each carry an N-linked (GlcNAc...) asparagine glycan. Residues phenylalanine 768 and glycine 777 each coordinate Na(+). An intrachain disulfide couples cysteine 876 to cysteine 902. Residue asparagine 930 is glycosylated (N-linked (GlcNAc...) asparagine). Cu(2+)-binding residues include histidine 999, histidine 1002, histidine 1004, histidine 1044, cysteine 1045, histidine 1046, histidine 1050, and methionine 1055. O2-binding residues include histidine 1002 and histidine 1004. Histidine 1046 is an O2 binding site. Residues 1110 to 1130 (ALIAICVLLLLIALALGGVVW) form a helical membrane-spanning segment. At 1131–1157 (YQHRQRKLRRNRRSILDDSFKLLSLKQ) the chain is on the cytoplasmic side. Serine 1144, serine 1149, and serine 1154 each carry phosphoserine.

The protein belongs to the multicopper oxidase family. Part of a complex composed of SLC40A1/ferroportin, TF/transferrin and HEPH/hephaestin that transfers iron from cells to transferrin. Cu cation is required as a cofactor.

It is found in the basolateral cell membrane. It carries out the reaction 4 Fe(2+) + O2 + 4 H(+) = 4 Fe(3+) + 2 H2O. In terms of biological role, plasma membrane ferroxidase that mediates the extracellular conversion of ferrous/Fe(2+) iron into its ferric/Fe(3+) form. Couples ferroportin which specifically exports ferrous/Fe(2+) iron from cells to transferrin that only binds and shuttles extracellular ferric/Fe(3+) iron throughout the body. By helping iron transfer from cells to blood mainly contributes to dietary iron absorption by the intestinal epithelium and more generally regulates iron levels in the body. The protein is Hephaestin of Mus musculus (Mouse).